A 480-amino-acid chain; its full sequence is Aspartyl/glutamyl-tRNA(Asn/Gln) amidotransferase subunit B (480 aa).

Belongs to the GatB/GatE family. GatB subfamily. Heterotrimer of A, B and C subunits.

The catalysed reaction is L-glutamyl-tRNA(Gln) + L-glutamine + ATP + H2O = L-glutaminyl-tRNA(Gln) + L-glutamate + ADP + phosphate + H(+). It catalyses the reaction L-aspartyl-tRNA(Asn) + L-glutamine + ATP + H2O = L-asparaginyl-tRNA(Asn) + L-glutamate + ADP + phosphate + 2 H(+). Its function is as follows. Allows the formation of correctly charged Asn-tRNA(Asn) or Gln-tRNA(Gln) through the transamidation of misacylated Asp-tRNA(Asn) or Glu-tRNA(Gln) in organisms which lack either or both of asparaginyl-tRNA or glutaminyl-tRNA synthetases. The reaction takes place in the presence of glutamine and ATP through an activated phospho-Asp-tRNA(Asn) or phospho-Glu-tRNA(Gln). This Caldicellulosiruptor bescii (strain ATCC BAA-1888 / DSM 6725 / KCTC 15123 / Z-1320) (Anaerocellum thermophilum) protein is Aspartyl/glutamyl-tRNA(Asn/Gln) amidotransferase subunit B.